The following is a 206-amino-acid chain: dITP/XTP pyrophosphatase (206 aa).

Residue 10 to 15 participates in substrate binding; it reads SRNAKK. Asp75 functions as the Proton acceptor in the catalytic mechanism. Asp75 contributes to the Mg(2+) binding site. Substrate contacts are provided by residues Ser76, 158 to 161, Lys181, and 186 to 187; these read FGYD and HR.

Belongs to the HAM1 NTPase family. In terms of assembly, homodimer. It depends on Mg(2+) as a cofactor.

It carries out the reaction XTP + H2O = XMP + diphosphate + H(+). It catalyses the reaction dITP + H2O = dIMP + diphosphate + H(+). The catalysed reaction is ITP + H2O = IMP + diphosphate + H(+). Functionally, pyrophosphatase that catalyzes the hydrolysis of nucleoside triphosphates to their monophosphate derivatives, with a high preference for the non-canonical purine nucleotides XTP (xanthosine triphosphate), dITP (deoxyinosine triphosphate) and ITP. Seems to function as a house-cleaning enzyme that removes non-canonical purine nucleotides from the nucleotide pool, thus preventing their incorporation into DNA/RNA and avoiding chromosomal lesions. This Nocardia farcinica (strain IFM 10152) protein is dITP/XTP pyrophosphatase.